Here is a 578-residue protein sequence, read N- to C-terminus: Pentatricopeptide repeat-containing protein At4g22760 (578 aa).

13 PPR repeats span residues D68–P102, S103–G137, C138–K168, N169–S203, W204–K230, S231–K261, N262–K292, D293–I327, D330–I364, D365–K395, D396–P430, N431–P465, and S466–Q496. The tract at residues V501–S576 is type E motif.

Belongs to the PPR family. PCMP-E subfamily.

This chain is Pentatricopeptide repeat-containing protein At4g22760 (PCMP-E6), found in Arabidopsis thaliana (Mouse-ear cress).